Here is a 639-residue protein sequence, read N- to C-terminus: Chaperone protein HtpG (639 aa).

Positions 1-343 (MEATATKEHL…SNDLPLNVSR (343 aa)) are a; substrate-binding. Residues 344 to 564 (EILQESKDIE…THDMSGNLER (221 aa)) are b. Residues 565 to 639 (LLKSAGQKVT…QLFLSTGSKE (75 aa)) form a c region.

Belongs to the heat shock protein 90 family. Homodimer.

It is found in the cytoplasm. Molecular chaperone. Has ATPase activity. This is Chaperone protein HtpG from Nitrosospira multiformis (strain ATCC 25196 / NCIMB 11849 / C 71).